Here is a 360-residue protein sequence, read N- to C-terminus: Decorin (360 aa).

The N-terminal stretch at 1-16 (MTATLILLLLAQVSWA) is a signal peptide. Residues 17 to 30 (GPFQQRGLFDFMLE) constitute a propeptide that is removed on maturation. Residue Ser34 is glycosylated (O-linked (Xyl...) (glycosaminoglycan) serine). Cystine bridges form between Cys55–Cys61 and Cys59–Cys68. LRR repeat units lie at residues 74–94 (DKVP…NNKI), 95–118 (TEIK…NNKI), 119–142 (SKIS…KNHL), 143–163 (KELP…ENEI), 164–187 (TKVR…TNPL), 188–213 (KSSG…DTNI), 214–234 (TTIP…GNKI), 235–258 (TKID…FNDI), 259–282 (SAVD…NNKL), 283–305 (IRVP…NNNI), 306–335 (SVVG…SNPV), and 336–360 (QYWE…GNYK). Asn212 carries N-linked (GlcNAc...) asparagine glycosylation. Asn263 and Asn304 each carry an N-linked (GlcNAc...) asparagine glycan. Cysteines 314 and 347 form a disulfide.

The protein belongs to the small leucine-rich proteoglycan (SLRP) family. SLRP class I subfamily. As to quaternary structure, binds to type I and type II collagen, fibronectin and TGF-beta. Forms a ternary complex with MFAP2 and ELN. Interacts with DPT. In terms of processing, the attached glycosaminoglycan chain can be either chondroitin sulfate or dermatan sulfate depending upon the tissue of origin.

Its subcellular location is the secreted. The protein localises to the extracellular space. It localises to the extracellular matrix. Its function is as follows. May affect the rate of fibrils formation. This is Decorin (DCN) from Oryctolagus cuniculus (Rabbit).